The sequence spans 429 residues: MSRSETLFANAQKHIPGGVNSPVRAFRGVGGTPLFFKHAEGAYVIDEDDKRYVDYVGSWGPMILGHAHPDVLEAVRRQLEHGLSYGAPTALETEMAELVCSLVPSMDMVRMVSSGTEATMSAIRLARGYTGRDSIIKFEGCYHGHSDSLLVKAGSGALTLGVPSSPGVPAAFAKHTLTLPYNDLGAVEKTLAEVGREIACIIVEPVAGNMNCVPPAPGFLEGLRAQCDQHGVVLIFDEVMTGFRVALGGAQAHYGVTPDLSTFGKIVGGGMPVGCFGGKRAIMECIAPLGPVYQAGTLSGNPLAMAAGLTTLKLIGRPGFHRELAEYTGRLLQGLQERADAAGIPFVTTQAGGMFGLYFSGADEIVTFADVMASDAERFKRFFHLMLDGGVYLAPSAFEAGFTSIVHGETELSITLEAAERAFATLAKA.

K265 carries the N6-(pyridoxal phosphate)lysine modification.

The protein belongs to the class-III pyridoxal-phosphate-dependent aminotransferase family. HemL subfamily. Homodimer. Requires pyridoxal 5'-phosphate as cofactor.

The protein localises to the cytoplasm. The enzyme catalyses (S)-4-amino-5-oxopentanoate = 5-aminolevulinate. The protein operates within porphyrin-containing compound metabolism; protoporphyrin-IX biosynthesis; 5-aminolevulinate from L-glutamyl-tRNA(Glu): step 2/2. The protein is Glutamate-1-semialdehyde 2,1-aminomutase of Azotobacter vinelandii (strain DJ / ATCC BAA-1303).